An 856-amino-acid chain; its full sequence is Serine/threonine-protein kinase unc-51 (856 aa).

The region spanning 9–275 (YSKRDLLGHG…FEDFFNHPFL (267 aa)) is the Protein kinase domain. ATP is bound by residues 15 to 23 (LGHGAFAIV) and K39. D134 functions as the Proton acceptor in the catalytic mechanism. The interval 304–327 (PQSSLPVPKRAGSTKLDSPTPVRR) is disordered. Residues 358–361 (FTFL) carry the LIR motif. Disordered stretches follow at residues 362 to 391 (PPRQ…PVPV), 405 to 471 (LAAA…ERMT), and 520 to 582 (PTTT…PTEP). Positions 365 to 385 (QESSPVKQVQVHTNVSPSLTT) are enriched in polar residues. Over residues 411-436 (TAVPSSSSPTGSAVSAQHQHQHQQQQ) the composition is skewed to low complexity. 2 stretches are compositionally biased toward polar residues: residues 527–536 (IPKSATTANI) and 566–578 (KYQQ…SPTA). The tract at residues 750 to 856 (YHQCLVRSQE…RQGFVAAVNT (107 aa)) is required for interaction with unc-14 and vab-8.

The protein belongs to the protein kinase superfamily. Ser/Thr protein kinase family. APG1/unc-51/ULK1 subfamily. Interacts with unc-14 and vab-8. Interacts (via C-terminus) with atg-13. Interacts (via the LIR motif) with lgg-1; the interaction is direct. Mg(2+) serves as cofactor.

The catalysed reaction is L-seryl-[protein] + ATP = O-phospho-L-seryl-[protein] + ADP + H(+). It catalyses the reaction L-threonyl-[protein] + ATP = O-phospho-L-threonyl-[protein] + ADP + H(+). Protein kinase important for axonal elongation and axonal guidance. Functions in the CAN axons to direct both anterior and posterior migrations. Phosphorylates both unc-14 and vab-8. Component of the unc-51/atg-13 complex that is probably recruited by lgg-1 to preautophagosomes and is required for autophagosome formation. Interaction with autophagy related proteins such as atg-13 links it to the autophagy machinery to in turn promote P-granule degradation in somatic cells. Plays a role in mitophagy during limited food availability. Regulates cell size. Plays a role in male tail ray pattern formation. May be required for normal dauer morphogenesis. This chain is Serine/threonine-protein kinase unc-51, found in Caenorhabditis elegans.